The chain runs to 400 residues: Argininosuccinate synthase (400 aa).

Residues 10-18 and Ala-38 each bind ATP; that span reads AYSGGVDTS. Tyr-89 contacts L-citrulline. Residue Gly-119 coordinates ATP. L-aspartate is bound by residues Thr-121, Asn-125, and Asp-126. Asn-125 contacts L-citrulline. 4 residues coordinate L-citrulline: Arg-129, Ser-177, Glu-262, and Tyr-274.

The protein belongs to the argininosuccinate synthase family. Type 1 subfamily. Homotetramer.

The protein localises to the cytoplasm. It catalyses the reaction L-citrulline + L-aspartate + ATP = 2-(N(omega)-L-arginino)succinate + AMP + diphosphate + H(+). It functions in the pathway amino-acid biosynthesis; L-arginine biosynthesis; L-arginine from L-ornithine and carbamoyl phosphate: step 2/3. The sequence is that of Argininosuccinate synthase from Trichodesmium erythraeum (strain IMS101).